We begin with the raw amino-acid sequence, 539 residues long: Protein TIC 55, chloroplastic (539 aa).

The N-terminal 50 residues, 1 to 50, are a transit peptide targeting the chloroplast; it reads MAVPFLSSSLQLTPTSPILFTKVTPTPIIHNHRSTCTIPTKPRLRLLRRS. The residue at position 51 (Ala-51) is an N-acetylalanine. Topologically, residues 51–482 are stromal; the sequence is AVAGTAVSDQ…VIKSFELWKN (432 aa). The 106-residue stretch at 88–193 folds into the Rieske domain; that stretch reads WYPLYLTKNV…VKDSQGVVWV (106 aa). The [2Fe-2S] cluster site is built by Cys-129, His-131, Cys-148, and His-151. Residues His-242 and His-247 each contribute to the Fe cation site. Positions 467-470 match the Redox-active motif motif; it reads CRSC. A helical transmembrane segment spans residues 483–500; that stretch reads ILSATAVALTALAILVVS. Residues 501–504 are Chloroplast intermembrane-facing; that stretch reads RQWK. The helical transmembrane segment at 505–527 threads the bilayer; the sequence is AVLLGSAALCSAAAYTCLRAINL. The Stromal segment spans residues 528–539; sequence NTNNFIRTHRRL.

In terms of assembly, part of the Tic complex. Interacts with TIC62 and TIC110. [2Fe-2S] cluster serves as cofactor. In terms of tissue distribution, highly expressed in green tissues and very low levels in non-photosynthetic tissues such as roots and etiolated seedlings.

It is found in the plastid. The protein resides in the chloroplast inner membrane. Involved in protein precursor import into chloroplasts. Part of the redox regulon consisting of TIC32, TIC 55 and TIC62. This chain is Protein TIC 55, chloroplastic (TIC55), found in Arabidopsis thaliana (Mouse-ear cress).